The sequence spans 166 residues: Small ribosomal subunit protein uS5 (166 aa).

One can recognise an S5 DRBM domain in the interval 11 to 74; the sequence is LEDRVVAINR…DAARKNLIEV (64 aa).

Belongs to the universal ribosomal protein uS5 family. As to quaternary structure, part of the 30S ribosomal subunit. Contacts proteins S4 and S8.

Its function is as follows. With S4 and S12 plays an important role in translational accuracy. Functionally, located at the back of the 30S subunit body where it stabilizes the conformation of the head with respect to the body. This chain is Small ribosomal subunit protein uS5, found in Ligilactobacillus salivarius (strain UCC118) (Lactobacillus salivarius).